A 798-amino-acid polypeptide reads, in one-letter code: Acetyl-CoA decarbonylase/synthase complex subunit alpha 2 (798 aa).

[4Fe-4S] cluster contacts are provided by Cys65, Cys68, Cys69, Cys71, Cys76, and Cys86. His109 lines the CO pocket. The [Ni-4Fe-4S] cluster site is built by His246, Cys274, and Cys313. 4Fe-4S ferredoxin-type domains lie at 395–424 and 434–463; these read EEQFMEYARACTQCGNCTIACPQGIRIGEA and SKLEKEWDVCIACGRCEQVCPKGIPIIDMY. Positions 405, 408, 411, 415, 443, 446, 449, and 453 each coordinate [4Fe-4S] cluster. Cys511, Cys540, and Cys575 together coordinate [Ni-4Fe-4S] cluster.

Belongs to the Ni-containing carbon monoxide dehydrogenase family. Heterotetramer of two alpha and two epsilon subunits. The ACDS complex is made up of alpha, epsilon, beta, gamma and delta subunits with a probable stoichiometry of (alpha(2)epsilon(2))(4)-beta(8)-(gamma(1)delta(1))(8). [4Fe-4S] cluster serves as cofactor. It depends on [Ni-4Fe-4S] cluster as a cofactor.

It catalyses the reaction CO + 2 oxidized [2Fe-2S]-[ferredoxin] + H2O = 2 reduced [2Fe-2S]-[ferredoxin] + CO2 + 2 H(+). In terms of biological role, part of the ACDS complex that catalyzes the reversible cleavage of acetyl-CoA, allowing autotrophic growth from CO(2). The alpha-epsilon subcomponent functions as a carbon monoxide dehydrogenase. This chain is Acetyl-CoA decarbonylase/synthase complex subunit alpha 2, found in Archaeoglobus fulgidus (strain ATCC 49558 / DSM 4304 / JCM 9628 / NBRC 100126 / VC-16).